The chain runs to 1319 residues: Protein Jumonji (1319 aa).

Residues 1-11 (MSKERPKRNII) show a composition bias toward basic residues. Disordered stretches follow at residues 1 to 23 (MSKERPKRNIIQKKYDDNDGMPW), 50 to 130 (DGID…PSLP), 173 to 265 (DEED…NTNG), 351 to 382 (YSNNHHHNSHHATSNGHGRPQLSHSGKAQSIN), 396 to 478 (HKMT…KALN), 499 to 537 (PIQKTGPAPPPSPPAAPASPSMPQNPAIPEPARQRPKRA), and 549 to 599 (QQRA…RSRA). Positions 61–70 (ASLSNGQLNG) are enriched in polar residues. The span at 74 to 88 (GHKEDGSRSQRKDGG) shows a compositional bias: basic and acidic residues. Positions 96-102 (PAKKRPR) match the Nuclear localization signal motif. Residues 98-107 (KKRPRLHAQR) are compositionally biased toward basic residues. Residues 109–121 (FAQSQPNSPSNTP) are compositionally biased toward polar residues. Over residues 173-185 (DEEDLEDEDEIEE) the composition is skewed to acidic residues. The span at 191–200 (VASTSCQSTP) shows a compositional bias: polar residues. Over residues 221–251 (KDKELTPRSKARESSVGRDRSERCDESEISH) the composition is skewed to basic and acidic residues. The segment covering 372-382 (LSHSGKAQSIN) has biased composition (polar residues). Over residues 413 to 424 (SAREEEVVDRPV) the composition is skewed to basic and acidic residues. A compositionally biased stretch (pro residues) spans 505–515 (PAPPPSPPAAP). Low complexity-rich tracts occupy residues 516-525 (ASPSMPQNPA) and 554-570 (TNPTLNRTTSTTSASKS). Residues 583–598 (RLDRDRERERERERSR) show a composition bias toward basic and acidic residues. The JmjN domain occupies 607 to 648 (VPIFKPSSREFQDPLVYLDSFREQVESCGLCRVLPPTDWRPE). An ARID domain is found at 671–779 (WGPNVQKLAC…FLLSYDLLSP (109 aa)). Over residues 798-811 (RKRGPLEGHSDNGH) the composition is skewed to basic and acidic residues. Residues 798-818 (RKRGPLEGHSDNGHHSLALPR) form a disordered region. Residues 944 to 948 (GSGFP) carry the GSGFP motif motif. The 165-residue stretch at 954 to 1118 (PFSKHGWNLT…LGYEAAKDLK (165 aa)) folds into the JmjC domain.

Belongs to the JARID2 family. Associates with the PRC2 complex.

Its subcellular location is the nucleus. Regulator of histone methyltransferase complexes that plays an essential role in embryonic development. Acts by modulating histone methyltransferase activity and promoting the recruitment of histone methyltransferase complexes to their target genes. Binds DNA and mediates the recruitment of the PRC2 complex to target genes in embryonic stem cells. Does not have histone demethylase activity but regulates activity of various histone methyltransferase complexes. In embryonic stem cells, it associates with the PRC2 complex and inhibits trimethylation of 'Lys-27' of histone H3 (H3K27me3) by the PRC2 complex, thereby playing a key role in differentiation of embryonic stem cells and normal development. The sequence is that of Protein Jumonji (jarid2b) from Danio rerio (Zebrafish).